The chain runs to 446 residues: Exodeoxyribonuclease 7 large subunit (446 aa).

Belongs to the XseA family. As to quaternary structure, heterooligomer composed of large and small subunits.

It localises to the cytoplasm. The enzyme catalyses Exonucleolytic cleavage in either 5'- to 3'- or 3'- to 5'-direction to yield nucleoside 5'-phosphates.. Functionally, bidirectionally degrades single-stranded DNA into large acid-insoluble oligonucleotides, which are then degraded further into small acid-soluble oligonucleotides. This Streptococcus thermophilus (strain CNRZ 1066) protein is Exodeoxyribonuclease 7 large subunit.